A 216-amino-acid polypeptide reads, in one-letter code: Putative germin-like protein 2-1 (216 aa).

Positions Met-1–Ala-21 are cleaved as a signal peptide. Cys-31 and Cys-46 are disulfide-bonded. Residues Ser-60–Asp-210 enclose the Cupin type-1 domain. The N-linked (GlcNAc...) asparagine glycan is linked to Asn-67. Positions 108, 110, 115, and 156 each coordinate Mn(2+).

It belongs to the germin family. As to quaternary structure, oligomer (believed to be a pentamer but probably hexamer).

It is found in the secreted. It localises to the extracellular space. The protein localises to the apoplast. Its function is as follows. May play a role in plant defense. Probably has no oxalate oxidase activity even if the active site is conserved. The polypeptide is Putative germin-like protein 2-1 (Oryza sativa subsp. japonica (Rice)).